Consider the following 156-residue polypeptide: Small ribosomal subunit protein uS7 (156 aa).

This sequence belongs to the universal ribosomal protein uS7 family. As to quaternary structure, part of the 30S ribosomal subunit. Contacts proteins S9 and S11.

Functionally, one of the primary rRNA binding proteins, it binds directly to 16S rRNA where it nucleates assembly of the head domain of the 30S subunit. Is located at the subunit interface close to the decoding center, probably blocks exit of the E-site tRNA. The polypeptide is Small ribosomal subunit protein uS7 (Neisseria meningitidis serogroup C (strain 053442)).